The sequence spans 57 residues: MKIIHVLLLVAVVAITMSPSIMAESVAEADKPGQAKKIGLFDQIDKAAAAFMKLFEG.

A signal peptide spans 1 to 23 (MKIIHVLLLVAVVAITMSPSIMA). A propeptide spanning residues 24–29 (ESVAEA) is cleaved from the precursor. Residue Glu56 is modified to Glutamic acid 1-amide.

As to expression, expressed by the venom gland.

Its subcellular location is the secreted. Its function is as follows. Induces paralysis 1 hour after injection into insects (blowfly L.caesar) but does not appear to be lethal. The chain is U13-myrmicitoxin-Mri1a from Manica rubida (European giant red ant).